The chain runs to 66 residues: Large ribosomal subunit protein bL33c (66 aa).

In terms of assembly, component of the chloroplast large ribosomal subunit (LSU). Mature 70S chloroplast ribosomes of higher plants consist of a small (30S) and a large (50S) subunit. The 30S small subunit contains 1 molecule of ribosomal RNA (16S rRNA) and 24 different proteins. The 50S large subunit contains 3 rRNA molecules (23S, 5S and 4.5S rRNA) and 33 different proteins.

It localises to the plastid. The protein resides in the chloroplast. Its function is as follows. Component of the chloroplast ribosome (chloro-ribosome), a dedicated translation machinery responsible for the synthesis of chloroplast genome-encoded proteins, including proteins of the transcription and translation machinery and components of the photosynthetic apparatus. The polypeptide is Large ribosomal subunit protein bL33c (rpl33) (Spinacia oleracea (Spinach)).